Reading from the N-terminus, the 329-residue chain is Strigolactones hydrolase CXE15 (329 aa).

The short motif at 83–85 (HGG) is the Involved in the stabilization of the negatively charged intermediate by the formation of the oxyanion hole element. Residues Gly85, Gly86, Ser169, and Ser170 each coordinate (-)-2'-epi-GR24. Ser169 serves as the catalytic Nucleophile. Residues Glu271 and His302 contribute to the active site.

Belongs to the 'GDXG' lipolytic enzyme family. As to expression, expressed in axillary buds, leaves, stems, hypocotyls, flowers, siliques, and vasculatures of shoots and roots.

The protein localises to the nucleus. It localises to the cytoplasm. It is found in the cytosol. The enzyme catalyses (-)-2'-epi-GR24 + H2O = (-)-2'-epi-GR24 ABC-rings + 5-hydroxy-3-methylfuran-2(5H)-one. The catalysed reaction is 5-deoxystrigol + H2O = 5-deoxystrigol ABC-rings + 5-hydroxy-3-methylfuran-2(5H)-one. It carries out the reaction orobanchol + H2O = orobanchol ABC-rings + 5-hydroxy-3-methylfuran-2(5H)-one. Its function is as follows. Binds to strigolactones (SLs) such as (-)-2'-epi-GR24(4DO), 5-deoxystrigol (5DS) and orobanchol, and catalyzes their hydrolysis; SL are phytohormones controlling shoot branching and communications between plants and microorganisms. Promotes shoot branching by dampening SL-inhibited axillary bud outgrowth. The sequence is that of Strigolactones hydrolase CXE15 from Arabidopsis thaliana (Mouse-ear cress).